We begin with the raw amino-acid sequence, 106 residues long: Iron-sulfur cluster assembly protein CyaY (106 aa).

It belongs to the frataxin family.

Functionally, involved in iron-sulfur (Fe-S) cluster assembly. May act as a regulator of Fe-S biogenesis. The polypeptide is Iron-sulfur cluster assembly protein CyaY (Serratia proteamaculans (strain 568)).